Reading from the N-terminus, the 526-residue chain is Peptide chain release factor 3 (526 aa).

One can recognise a tr-type G domain in the interval 9-277 (DKRRTFAIIS…GIVEWAPKPL (269 aa)). GTP-binding positions include 18-25 (SHPDAGKT), 86-90 (DTPGH), and 140-143 (NKLD).

Belongs to the TRAFAC class translation factor GTPase superfamily. Classic translation factor GTPase family. PrfC subfamily.

It localises to the cytoplasm. Increases the formation of ribosomal termination complexes and stimulates activities of RF-1 and RF-2. It binds guanine nucleotides and has strong preference for UGA stop codons. It may interact directly with the ribosome. The stimulation of RF-1 and RF-2 is significantly reduced by GTP and GDP, but not by GMP. This chain is Peptide chain release factor 3, found in Shewanella baltica (strain OS155 / ATCC BAA-1091).